A 1242-amino-acid chain; its full sequence is DNA excision repair protein ERCC-6-like (1242 aa).

Ser-14 is subject to Phosphoserine. A TPR 1 repeat occupies 21–54 (YLRYVKEAKEATKNGDLEQALKLFNLAKDIFPNE). The 169-residue stretch at 109 to 277 (SLYRDGRRGG…WSLFDFACQG (169 aa)) folds into the Helicase ATP-binding domain. Residue 122-129 (DDMGLGKT) coordinates ATP. Positions 228–231 (DEAH) match the DEAH box motif. The Helicase C-terminal domain occupies 466 to 626 (FLMDLLKKLR…PFRYFSKQEL (161 aa)). Phosphoserine is present on residues Ser-755 and Ser-773. Thr-815 carries the post-translational modification Phosphothreonine. A phosphoserine mark is found at Ser-963, Ser-989, Ser-998, and Ser-1021. A Phosphothreonine modification is found at Thr-1055. Residues Ser-1061, Ser-1090, and Ser-1110 each carry the phosphoserine modification. The disordered stretch occupies residues 1103–1181 (EERLDNSSEA…LSDGQLVDSP (79 aa)). 2 stretches are compositionally biased toward basic and acidic residues: residues 1105–1121 (RLDN…HLEE) and 1130–1140 (APEHTKEDPSR). The segment covering 1141–1156 (ETLSSENKSSQLSTSK) has biased composition (polar residues). A phosphoserine mark is found at Ser-1173 and Ser-1180. One copy of the TPR 2 repeat lies at 1192–1225 (YDTLVLHGKELKECGKIQEALDCLVKALDIKSSD).

The protein belongs to the SNF2/RAD54 helicase family. In terms of assembly, interacts with PLK1, which phosphorylates it. Both proteins are mutually dependent on each other for correct subcellular localization. Interacts (via N-terminal TPR repeat) with BEND3 (via BEN domains 1 and 3); the interaction is direct. In terms of processing, phosphorylation by PLK1 prevents the association with chromosome arms and restricts its localization to the kinetochore-centromere region.

The protein localises to the chromosome. The protein resides in the centromere. Its subcellular location is the kinetochore. The catalysed reaction is ATP + H2O = ADP + phosphate + H(+). DNA helicase that acts as a tension sensor that associates with catenated DNA which is stretched under tension until it is resolved during anaphase. Functions as ATP-dependent DNA translocase. Can promote Holliday junction branch migration (in vitro). The polypeptide is DNA excision repair protein ERCC-6-like (ERCC6L) (Bos taurus (Bovine)).